The following is a 125-amino-acid chain: Putative glutaredoxin-C2 (125 aa).

The Glutaredoxin domain maps to 2 to 103 (AERVARLSSQ…PLLREAGALW (102 aa)). The cysteines at positions 22 and 25 are disulfide-linked.

Belongs to the glutaredoxin family. CC-type subfamily.

It localises to the cytoplasm. Its function is as follows. Has a glutathione-disulfide oxidoreductase activity in the presence of NADPH and glutathione reductase. Reduces low molecular weight disulfides and proteins. The sequence is that of Putative glutaredoxin-C2 (GRXC2) from Oryza sativa subsp. japonica (Rice).